We begin with the raw amino-acid sequence, 288 residues long: Small ribosomal subunit protein uS2 (288 aa).

A compositionally biased stretch (low complexity) spans 259–276 (EAAPAAEEAPAAEAEAAA). The tract at residues 259–288 (EAAPAAEEAPAAEAEAAATDTSSESDKTEA) is disordered.

It belongs to the universal ribosomal protein uS2 family.

The chain is Small ribosomal subunit protein uS2 from Maricaulis maris (strain MCS10) (Caulobacter maris).